The primary structure comprises 252 residues: Transcriptional regulatory protein HptR (252 aa).

The region spanning 3–118 (KVVICDDERI…QLEVILGRLV (116 aa)) is the Response regulatory domain. Position 55 is a 4-aspartylphosphate (aspartate 55). An HTH araC/xylS-type domain is found at 153–250 (NQIVDQIKQS…QMSPSDYCKQ (98 aa)). 2 consecutive DNA-binding regions (H-T-H motif) follow at residues 170–191 (SDLI…KDHV) and 217–240 (HYEI…KKYL).

Post-translationally, phosphorylated by HptS.

It is found in the cytoplasm. Functionally, member of the two-component regulatory system HptS/HptR that regulates genes involved in hexose phosphate transport system in response to changes in extracellular phosphate sources. Activates uhpT expression to facilitate glucose-6-phosphate/G6P utilization by directly binding to its promoter. Antagonizes CcpA-dependent transcription of a subset of CcpA-regulated genes involved in antibiotic susceptibility. In Staphylococcus aureus (strain MRSA252), this protein is Transcriptional regulatory protein HptR (hptR).